Here is a 391-residue protein sequence, read N- to C-terminus: tRNA-specific 2-thiouridylase MnmA (391 aa).

Residues glycine 35–serine 42 and leucine 61 each bind ATP. The active-site Nucleophile is the cysteine 122. Cysteine 122 and cysteine 221 are disulfide-bonded. Glycine 147 contacts ATP. The tract at residues lysine 171 to glutamine 173 is interaction with tRNA. Catalysis depends on cysteine 221, which acts as the Cysteine persulfide intermediate. The segment at arginine 328–tyrosine 329 is interaction with tRNA.

This sequence belongs to the MnmA/TRMU family.

The protein resides in the cytoplasm. It carries out the reaction S-sulfanyl-L-cysteinyl-[protein] + uridine(34) in tRNA + AH2 + ATP = 2-thiouridine(34) in tRNA + L-cysteinyl-[protein] + A + AMP + diphosphate + H(+). In terms of biological role, catalyzes the 2-thiolation of uridine at the wobble position (U34) of tRNA, leading to the formation of s(2)U34. In Synechococcus sp. (strain CC9311), this protein is tRNA-specific 2-thiouridylase MnmA.